The sequence spans 349 residues: 5-deoxyribose 1-phosphate isomerase (349 aa).

Substrate is bound by residues 49–51 (RGA), Arg92, and Gln199. The active-site Proton donor is Asp240. 250–251 (NK) is a substrate binding site.

The protein belongs to the EIF-2B alpha/beta/delta subunits family. DrdI subfamily.

It carries out the reaction 5-deoxy-alpha-D-ribose 1-phosphate = 5-deoxy-D-ribulose 1-phosphate. The protein operates within carbohydrate degradation. Catalyzes the isomerization of 5-deoxy-alpha-D-ribose 1-phosphate to 5-deoxy-D-ribulose 1-phosphate, as part of a 5-deoxyribose salvage pathway that recycles this toxic radical SAM enzyme by-product to mainstream metabolites. In Clostridium botulinum (strain Okra / Type B1), this protein is 5-deoxyribose 1-phosphate isomerase.